The following is a 251-amino-acid chain: Triosephosphate isomerase 1 (251 aa).

Residue 9–11 coordinates substrate; that stretch reads NWK. The Electrophile role is filled by H95. The active-site Proton acceptor is the E167. Substrate-binding positions include G173, S213, and 234–235; that span reads GG.

The protein belongs to the triosephosphate isomerase family. Homodimer.

Its subcellular location is the cytoplasm. The enzyme catalyses D-glyceraldehyde 3-phosphate = dihydroxyacetone phosphate. It functions in the pathway carbohydrate biosynthesis; gluconeogenesis. Its pathway is carbohydrate degradation; glycolysis; D-glyceraldehyde 3-phosphate from glycerone phosphate: step 1/1. Its function is as follows. Involved in the gluconeogenesis. Catalyzes stereospecifically the conversion of dihydroxyacetone phosphate (DHAP) to D-glyceraldehyde-3-phosphate (G3P). This is Triosephosphate isomerase 1 from Listeria innocua serovar 6a (strain ATCC BAA-680 / CLIP 11262).